The primary structure comprises 129 residues: Large ribosomal subunit protein bL20 (129 aa).

The protein belongs to the bacterial ribosomal protein bL20 family.

In terms of biological role, binds directly to 23S ribosomal RNA and is necessary for the in vitro assembly process of the 50S ribosomal subunit. It is not involved in the protein synthesizing functions of that subunit. This chain is Large ribosomal subunit protein bL20, found in Rhodococcus jostii (strain RHA1).